Here is a 485-residue protein sequence, read N- to C-terminus: Portal protein (485 aa).

The interval 456–485 (MVDADPTVPGSPNPTPAPKPQPAIEGGDSA) is disordered. Residues 464 to 476 (PGSPNPTPAPKPQ) are compositionally biased toward pro residues.

It belongs to the SPP1-like portal protein family. As to quaternary structure, homododecamer.

The protein localises to the virion. Functionally, forms the portal vertex of the capsid. This portal plays critical roles in head assembly, genome packaging, neck/tail attachment, and genome ejection. The portal protein multimerizes as a single ring-shaped homododecamer arranged around a central channel. Binds to the terminase subunits to form the packaging machine. In Mycobacterium (Mycobacteriophage D29), this protein is Portal protein (14).